The primary structure comprises 252 residues: Chitooligosaccharide deacetylase (252 aa).

Mg(2+) contacts are provided by His61 and His125.

It belongs to the YdjC deacetylase family. ChbG subfamily. In terms of assembly, homodimer. Requires Mg(2+) as cofactor.

Its subcellular location is the cytoplasm. The enzyme catalyses N,N'-diacetylchitobiose + H2O = N-acetyl-beta-D-glucosaminyl-(1-&gt;4)-D-glucosamine + acetate. The catalysed reaction is diacetylchitobiose-6'-phosphate + H2O = N'-monoacetylchitobiose-6'-phosphate + acetate. Its pathway is glycan degradation; chitin degradation. In terms of biological role, involved in the degradation of chitin. ChbG is essential for growth on the acetylated chitooligosaccharides chitobiose and chitotriose but is dispensable for growth on cellobiose and chitosan dimer, the deacetylated form of chitobiose. Deacetylation of chitobiose-6-P and chitotriose-6-P is necessary for both the activation of the chb promoter by the regulatory protein ChbR and the hydrolysis of phosphorylated beta-glucosides by the phospho-beta-glucosidase ChbF. Catalyzes the removal of only one acetyl group from chitobiose-6-P to yield monoacetylchitobiose-6-P, the inducer of ChbR and the substrate of ChbF. The sequence is that of Chitooligosaccharide deacetylase from Enterobacter sp. (strain 638).